A 572-amino-acid polypeptide reads, in one-letter code: Mitochondrial distribution and morphology protein 34 (572 aa).

The SMP-LTD domain maps to 1 to 195; the sequence is MAFNFNWSPL…LPAIIHRLSL (195 aa). Disordered stretches follow at residues 210–239, 330–423, and 455–482; these read TQAE…VDAL, SASI…PLSP, and RDMG…TPRA. Residues 330-347 show a composition bias toward polar residues; the sequence is SASIASMQTRSSTPSHTF. Residues 358–370 show a composition bias toward basic residues; that stretch reads RHSKAHSRKRKKR. Residues 371–381 show a composition bias toward basic and acidic residues; it reads VVDLRRPKTTD. 2 stretches are compositionally biased toward polar residues: residues 387–400 and 460–480; these read SDES…SAPS and PSST…SATP.

This sequence belongs to the MDM34 family. Component of the ER-mitochondria encounter structure (ERMES) or MDM complex, composed of mmm1, mdm10, mdm12 and mdm34.

Its subcellular location is the mitochondrion outer membrane. In terms of biological role, component of the ERMES/MDM complex, which serves as a molecular tether to connect the endoplasmic reticulum (ER) and mitochondria. Components of this complex are involved in the control of mitochondrial shape and protein biogenesis, and function in nonvesicular lipid trafficking between the ER and mitochondria. Mdm34 is required for the interaction of the ER-resident membrane protein mmm1 and the outer mitochondrial membrane-resident beta-barrel protein mdm10. The chain is Mitochondrial distribution and morphology protein 34 from Aspergillus clavatus (strain ATCC 1007 / CBS 513.65 / DSM 816 / NCTC 3887 / NRRL 1 / QM 1276 / 107).